Consider the following 199-residue polypeptide: dTTP/UTP pyrophosphatase (199 aa).

Residue D75 is the Proton acceptor of the active site.

Belongs to the Maf family. YhdE subfamily. A divalent metal cation is required as a cofactor.

The protein resides in the cytoplasm. The enzyme catalyses dTTP + H2O = dTMP + diphosphate + H(+). It catalyses the reaction UTP + H2O = UMP + diphosphate + H(+). Functionally, nucleoside triphosphate pyrophosphatase that hydrolyzes dTTP and UTP. May have a dual role in cell division arrest and in preventing the incorporation of modified nucleotides into cellular nucleic acids. The polypeptide is dTTP/UTP pyrophosphatase (Methylobacillus flagellatus (strain ATCC 51484 / DSM 6875 / VKM B-1610 / KT)).